A 494-amino-acid chain; its full sequence is Arp2/3 complex-activating protein rickA (494 aa).

The disordered stretch occupies residues 312–494 (PLENNIPPPP…RNSQKPSFVR (183 aa)). Residues 317-357 (IPPPPPPPPPLPDNNIPPPPPPPPPLPDNNIPPPPPPPPMA) show a composition bias toward pro residues. Residues 383–400 (DTSDLMREIAGPKKLKKV) enclose the WH2 domain. Residues 421–454 (VNKPSGLESIFARRVAIEMSDSSSSESDSGNWSD) form a central and acidic domains region. A compositionally biased stretch (low complexity) spans 440–456 (SDSSSSESDSGNWSDVS). Polar residues predominate over residues 477-494 (THAQKINNRNSQKPSFVR).

The protein localises to the cell surface. In terms of biological role, recruits and activates the Arp2/3 complex, which in turn leads to actin polymerization, promoting Rickettsia motility during infection. The chain is Arp2/3 complex-activating protein rickA (rickA) from Rickettsia rickettsii.